The primary structure comprises 147 residues: MALRACGLIIFRRHLIPKVDNTTIEFLLLQASDGIHHWTPPKGHVDPGENDLETALRETQEETGIEASQLIVLEGFRRELNYVARKKPKTVIYWLAEVKDYDVEIRLSQEHQAYRWLGLDEACQLAQFEEMKATLQEGHQFLCSTPA.

Ala-2 bears the N-acetylalanine mark. The region spanning Ala-2–His-139 is the Nudix hydrolase domain. Positions Gly-43–Gly-64 match the Nudix box motif.

This sequence belongs to the Nudix hydrolase family. Requires a divalent metal cation as cofactor.

The catalysed reaction is P(1),P(4)-bis(5'-guanosyl) tetraphosphate + H2O = GMP + GTP + 2 H(+). It carries out the reaction a 5'-end CoA-ribonucleoside in mRNA + H2O = a 5'-end phospho-adenosine-phospho-ribonucleoside in mRNA + (R)-4'-phosphopantetheine + 2 H(+). It catalyses the reaction a 5'-end FAD-phospho-ribonucleoside in mRNA + H2O = a 5'-end phospho-adenosine-phospho-ribonucleoside in mRNA + FMN + 2 H(+). Functionally, catalyzes the asymmetric hydrolysis of diadenosine 5',5'''-P1,P4-tetraphosphate (Ap4A) to yield AMP and ATP. Exhibits decapping activity towards FAD-capped RNAs and dpCoA-capped RNAs in vitro. This is Bis(5'-nucleosyl)-tetraphosphatase [asymmetrical] (Nudt2) from Rattus norvegicus (Rat).